Reading from the N-terminus, the 404-residue chain is RNA exonuclease 3 (404 aa).

Polar residues predominate over residues 1–17 (MNNNAQNKRSLDDSNGN). The segment at 1-29 (MNNNAQNKRSLDDSNGNDTKRPKQEDPKY) is disordered. Basic and acidic residues predominate over residues 18–28 (DTKRPKQEDPK). Positions 241–389 (VLGIDCEMGF…EDSIAAIDIV (149 aa)) constitute an Exonuclease domain.

The protein belongs to the REXO1/REXO3 family.

The protein localises to the cytoplasm. It localises to the nucleus. Functionally, 3' to 5' exoribonuclease required for proper 3' end maturation of MRP RNA and of the U5L snRNA. The sequence is that of RNA exonuclease 3 (REX3) from Candida albicans (strain SC5314 / ATCC MYA-2876) (Yeast).